Reading from the N-terminus, the 282-residue chain is UDP-N-acetylenolpyruvoylglucosamine reductase (282 aa).

Residues 15–179 enclose the FAD-binding PCMH-type domain; that stretch reads IKSFAKYVYF…LSAEFEFEYK (165 aa). The active site involves arginine 157. Serine 207 serves as the catalytic Proton donor. The active site involves glutamate 278.

It belongs to the MurB family. Requires FAD as cofactor.

The protein resides in the cytoplasm. It catalyses the reaction UDP-N-acetyl-alpha-D-muramate + NADP(+) = UDP-N-acetyl-3-O-(1-carboxyvinyl)-alpha-D-glucosamine + NADPH + H(+). It participates in cell wall biogenesis; peptidoglycan biosynthesis. Cell wall formation. This is UDP-N-acetylenolpyruvoylglucosamine reductase from Francisella tularensis subsp. tularensis (strain SCHU S4 / Schu 4).